A 273-amino-acid chain; its full sequence is Transposable element Tcb1 transposase (273 aa).

It belongs to the transposase 5 family.

It localises to the nucleus. Probably essential for transposable element Tcb1 transposition. The insertion of Tcb1 is the main cause of spontaneous mutations. The chain is Transposable element Tcb1 transposase from Caenorhabditis briggsae.